Here is a 1006-residue protein sequence, read N- to C-terminus: Probable protein phosphatase DDB_G0279461 (1006 aa).

Over residues 1 to 12 (MMVPSLSTSISS) the composition is skewed to polar residues. Disordered stretches follow at residues 1–119 (MMVP…NNKE), 146–188 (SHAS…RSNS), 214–269 (SSED…NGIR), 312–387 (DAES…PPNQ), 459–513 (NINN…NNIQ), 525–563 (DYNI…NSKF), and 604–642 (GSIP…TSAS). The segment covering 59 to 69 (NEEEGTADNEL) has biased composition (acidic residues). A coiled-coil region spans residues 65 to 122 (ADNELESLMSLVNDNNNNNNNTSGIDDDNNNDIDDNNNNNNNNNNNNNNNNNNKEGLN). Low complexity predominate over residues 77 to 88 (NDNNNNNNNTSG). Residues 89-99 (IDDDNNNDIDD) are compositionally biased toward acidic residues. Residues 100-117 (NNNNNNNNNNNNNNNNNN) are compositionally biased toward low complexity. A compositionally biased stretch (polar residues) spans 146-158 (SHASVSNQSSNGS). Composition is skewed to low complexity over residues 220-234 (SCHN…NKNN), 244-254 (NINNNNNNNCN), and 316-387 (NYNN…PPNQ). Residues 450-516 (KIDNLNKNIN…NNNNNIQDIQ (67 aa)) adopt a coiled-coil conformation. Positions 466–481 (TDSQQPLPSIDVNFSH) are enriched in polar residues. Over residues 482–511 (NNNNNNNDNDNNNNNNNNNNNNNNNNNNNN) the composition is skewed to low complexity. The span at 525–538 (DYNIQEGNDINNDN) shows a compositional bias: polar residues. Low complexity-rich tracts occupy residues 552–561 (SSNNNNNNNS) and 613–639 (NNNN…TTTT). The PPM-type phosphatase domain maps to 744-1005 (DINKRGLKRA…DNISIIVVTL (262 aa)). Positions 784, 785, 956, and 996 each coordinate Mn(2+).

This sequence in the C-terminal section; belongs to the PP2C family. The cofactor is Mg(2+). Mn(2+) is required as a cofactor.

It catalyses the reaction O-phospho-L-seryl-[protein] + H2O = L-seryl-[protein] + phosphate. It carries out the reaction O-phospho-L-threonyl-[protein] + H2O = L-threonyl-[protein] + phosphate. The protein is Probable protein phosphatase DDB_G0279461 of Dictyostelium discoideum (Social amoeba).